The chain runs to 141 residues: ATP synthase epsilon chain (141 aa).

This sequence belongs to the ATPase epsilon chain family. F-type ATPases have 2 components, CF(1) - the catalytic core - and CF(0) - the membrane proton channel. CF(1) has five subunits: alpha(3), beta(3), gamma(1), delta(1), epsilon(1). CF(0) has three main subunits: a, b and c.

Its subcellular location is the cell inner membrane. In terms of biological role, produces ATP from ADP in the presence of a proton gradient across the membrane. The polypeptide is ATP synthase epsilon chain (Chromohalobacter salexigens (strain ATCC BAA-138 / DSM 3043 / CIP 106854 / NCIMB 13768 / 1H11)).